The sequence spans 407 residues: Putative cystathionine beta-lyase (407 aa).

An N6-(pyridoxal phosphate)lysine modification is found at Lys237.

Belongs to the class-II pyridoxal-phosphate-dependent aminotransferase family. MalY/PatB cystathionine beta-lyase subfamily. Pyridoxal 5'-phosphate serves as cofactor.

It carries out the reaction L,L-cystathionine + H2O = L-homocysteine + pyruvate + NH4(+). The enzyme catalyses an S-substituted L-cysteine + H2O = a thiol + pyruvate + NH4(+). Its pathway is amino-acid biosynthesis; L-methionine biosynthesis via de novo pathway; L-homocysteine from L-cystathionine: step 1/1. The sequence is that of Putative cystathionine beta-lyase from Mycobacterium tuberculosis (strain CDC 1551 / Oshkosh).